A 425-amino-acid chain; its full sequence is Serine hydroxymethyltransferase (425 aa).

(6S)-5,6,7,8-tetrahydrofolate is bound by residues Leu-126 and Gly-130 to Leu-132. At Lys-234 the chain carries N6-(pyridoxal phosphate)lysine.

It belongs to the SHMT family. Homodimer. It depends on pyridoxal 5'-phosphate as a cofactor.

Its subcellular location is the cytoplasm. It carries out the reaction (6R)-5,10-methylene-5,6,7,8-tetrahydrofolate + glycine + H2O = (6S)-5,6,7,8-tetrahydrofolate + L-serine. It functions in the pathway one-carbon metabolism; tetrahydrofolate interconversion. Its pathway is amino-acid biosynthesis; glycine biosynthesis; glycine from L-serine: step 1/1. Its function is as follows. Catalyzes the reversible interconversion of serine and glycine with tetrahydrofolate (THF) serving as the one-carbon carrier. This reaction serves as the major source of one-carbon groups required for the biosynthesis of purines, thymidylate, methionine, and other important biomolecules. Also exhibits THF-independent aldolase activity toward beta-hydroxyamino acids, producing glycine and aldehydes, via a retro-aldol mechanism. This is Serine hydroxymethyltransferase from Desulfotalea psychrophila (strain LSv54 / DSM 12343).